The chain runs to 318 residues: NADH-ubiquinone oxidoreductase chain 1 (318 aa).

9 helical membrane-spanning segments follow: residues 2-22 (FLMNILCLVIPILLAMAFLTL), 37-57 (PNIVGPYGLLQPIADAIKLFI), 69-89 (LMFTLAPTLAFTLALSLWIPM), 100-120 (LGVLFILALSSLAVYSILWSG), 136-156 (VAQTISYEVTLAIILLSVMMM), 171-191 (HMWLILPLWPLAMMWFISTLA), 231-251 (IIMMNALTATLFLGAFHNPLF), 253-273 (ELFTVNFITKTLILTAIFLWV), and 293-313 (FLPLTLALCMLHVSIPALSAG).

The protein belongs to the complex I subunit 1 family. In terms of assembly, core subunit of respiratory chain NADH dehydrogenase (Complex I) which is composed of 45 different subunits.

The protein localises to the mitochondrion inner membrane. It catalyses the reaction a ubiquinone + NADH + 5 H(+)(in) = a ubiquinol + NAD(+) + 4 H(+)(out). Functionally, core subunit of the mitochondrial membrane respiratory chain NADH dehydrogenase (Complex I) which catalyzes electron transfer from NADH through the respiratory chain, using ubiquinone as an electron acceptor. Essential for the catalytic activity and assembly of complex I. The sequence is that of NADH-ubiquinone oxidoreductase chain 1 (MT-ND1) from Zaedyus pichiy (Pichi).